The primary structure comprises 469 residues: Coumaroyl-CoA:anthocyanidin 3-O-glucoside-6''-O-coumaroyltransferase 1 (469 aa).

M1 bears the N-acetylmethionine mark. Catalysis depends on proton acceptor residues H173 and D410.

It belongs to the plant acyltransferase family. As to expression, highly expressed in flowers, leaves and roots. Lower levels of expression in stems and siliques.

Its function is as follows. Involved in the acylation of the 6'' position of the 3-O-glucose residue of anthocyanin. Also able to use flavonol 3-glucosides as the acyl acceptor. This is Coumaroyl-CoA:anthocyanidin 3-O-glucoside-6''-O-coumaroyltransferase 1 (3AT1) from Arabidopsis thaliana (Mouse-ear cress).